The primary structure comprises 520 residues: Transcription factor MYB33 (520 aa).

Residues 1–24 (MSYTSTDSDHNESPAADDNGSDCR) are disordered. 2 HTH myb-type domains span residues 29–81 (GHAL…ANHL) and 82–136 (RPNL…KRRQ). 2 DNA-binding regions (H-T-H motif) span residues 57–81 (WNAV…ANHL) and 109–132 (WARM…NTRI). The span at 331–342 (SSSPPHSDLLDP) shows a compositional bias: low complexity. Disordered stretches follow at residues 331 to 359 (SSSP…GEES) and 426 to 447 (EMST…RKPL).

As to expression, mostly expressed in stems, shoot apices, flowers and floral shoot tips, and, to a lower extent, in roots (e.g. root tips), seedlings, leaves and siliques.

It localises to the nucleus. In terms of biological role, transcriptional activator of alpha-amylase expression that binds to 5'-CAACTGTC-3' motif in target gene promoter. Positive regulator of abscisic acid (ABA) responses leading to growth arrest during seed germination. In vegetative tissues, inhibits growth by reducing cell proliferation. Promotes the expression of aleurone-related genes (e.g. CP1, CP, GASA1, BXL1 and BXL2) in seeds. Together with MYB65 and MYB101, promotes the programmed cell death (PCD) the vacuolation of protein storage vacuoles (PSVs) in the aleurone layers during seed germination. Binds to a GARE site (GA-response element) in the LEAFY promoter, essential for its gibberellic acid (GA)-mediated induction. Together with MYB65, facilitates anther and tapetum development. The sequence is that of Transcription factor MYB33 from Arabidopsis thaliana (Mouse-ear cress).